The primary structure comprises 192 residues: Acetolactate synthase small subunit (192 aa).

Residues 29–103 (IITVKVRNEM…DTLKVSDLTD (75 aa)) form the ACT domain.

This sequence belongs to the acetolactate synthase small subunit family. Dimer of large and small chains.

It catalyses the reaction 2 pyruvate + H(+) = (2S)-2-acetolactate + CO2. Its pathway is amino-acid biosynthesis; L-isoleucine biosynthesis; L-isoleucine from 2-oxobutanoate: step 1/4. It functions in the pathway amino-acid biosynthesis; L-valine biosynthesis; L-valine from pyruvate: step 1/4. This chain is Acetolactate synthase small subunit (ilvH), found in Aquifex aeolicus (strain VF5).